We begin with the raw amino-acid sequence, 438 residues long: Probable tRNA pseudouridine synthase D (438 aa).

The active-site Nucleophile is the aspartate 86. Residues 165–390 form the TRUD domain; sequence GVPNFFGIQR…SKGTRREVLL (226 aa).

The protein belongs to the pseudouridine synthase TruD family.

The catalysed reaction is uridine(13) in tRNA = pseudouridine(13) in tRNA. Its function is as follows. Could be responsible for synthesis of pseudouridine from uracil-13 in transfer RNAs. The sequence is that of Probable tRNA pseudouridine synthase D from Methanosarcina mazei (strain ATCC BAA-159 / DSM 3647 / Goe1 / Go1 / JCM 11833 / OCM 88) (Methanosarcina frisia).